The sequence spans 284 residues: NAD kinase (284 aa).

Residue aspartate 71 is the Proton acceptor of the active site. NAD(+) contacts are provided by residues 71 to 72 (DG), 144 to 145 (ND), aspartate 174, 185 to 190 (TAYNLS), and glutamine 242.

The protein belongs to the NAD kinase family. It depends on a divalent metal cation as a cofactor.

The protein localises to the cytoplasm. The catalysed reaction is NAD(+) + ATP = ADP + NADP(+) + H(+). Its function is as follows. Involved in the regulation of the intracellular balance of NAD and NADP, and is a key enzyme in the biosynthesis of NADP. Catalyzes specifically the phosphorylation on 2'-hydroxyl of the adenosine moiety of NAD to yield NADP. In Sulfurimonas denitrificans (strain ATCC 33889 / DSM 1251) (Thiomicrospira denitrificans (strain ATCC 33889 / DSM 1251)), this protein is NAD kinase.